The sequence spans 337 residues: tRNA N6-adenosine threonylcarbamoyltransferase (337 aa).

2 residues coordinate Fe cation: histidine 111 and histidine 115. Residues leucine 134–glycine 138, aspartate 167, glycine 180, and asparagine 272 contribute to the substrate site. Aspartate 300 is a Fe cation binding site.

It belongs to the KAE1 / TsaD family. It depends on Fe(2+) as a cofactor.

Its subcellular location is the cytoplasm. The catalysed reaction is L-threonylcarbamoyladenylate + adenosine(37) in tRNA = N(6)-L-threonylcarbamoyladenosine(37) in tRNA + AMP + H(+). Required for the formation of a threonylcarbamoyl group on adenosine at position 37 (t(6)A37) in tRNAs that read codons beginning with adenine. Is involved in the transfer of the threonylcarbamoyl moiety of threonylcarbamoyl-AMP (TC-AMP) to the N6 group of A37, together with TsaE and TsaB. TsaD likely plays a direct catalytic role in this reaction. The sequence is that of tRNA N6-adenosine threonylcarbamoyltransferase from Erwinia tasmaniensis (strain DSM 17950 / CFBP 7177 / CIP 109463 / NCPPB 4357 / Et1/99).